Reading from the N-terminus, the 610-residue chain is Elongation factor 4 (610 aa).

Residues 11–193 (EKIRNFSIIA…QIVEKVPAPS (183 aa)) enclose the tr-type G domain. GTP is bound by residues 23-28 (DHGKST) and 140-143 (NKID).

Belongs to the TRAFAC class translation factor GTPase superfamily. Classic translation factor GTPase family. LepA subfamily.

Its subcellular location is the cell membrane. The catalysed reaction is GTP + H2O = GDP + phosphate + H(+). Its function is as follows. Required for accurate and efficient protein synthesis under certain stress conditions. May act as a fidelity factor of the translation reaction, by catalyzing a one-codon backward translocation of tRNAs on improperly translocated ribosomes. Back-translocation proceeds from a post-translocation (POST) complex to a pre-translocation (PRE) complex, thus giving elongation factor G a second chance to translocate the tRNAs correctly. Binds to ribosomes in a GTP-dependent manner. In Streptococcus uberis (strain ATCC BAA-854 / 0140J), this protein is Elongation factor 4.